The chain runs to 197 residues: Nucleoside triphosphate pyrophosphatase (197 aa).

Aspartate 71 (proton acceptor) is an active-site residue.

It belongs to the Maf family. Requires a divalent metal cation as cofactor.

The protein localises to the cytoplasm. It catalyses the reaction a ribonucleoside 5'-triphosphate + H2O = a ribonucleoside 5'-phosphate + diphosphate + H(+). The catalysed reaction is a 2'-deoxyribonucleoside 5'-triphosphate + H2O = a 2'-deoxyribonucleoside 5'-phosphate + diphosphate + H(+). Nucleoside triphosphate pyrophosphatase. May have a dual role in cell division arrest and in preventing the incorporation of modified nucleotides into cellular nucleic acids. The protein is Nucleoside triphosphate pyrophosphatase of Synechococcus sp. (strain JA-3-3Ab) (Cyanobacteria bacterium Yellowstone A-Prime).